The primary structure comprises 168 residues: Photosystem I assembly protein Ycf3 (168 aa).

TPR repeat units follow at residues 35–68, 72–105, and 120–153; these read AFTYYRDRMSAQSEGNYAEALQNYYEAMRLEIDP, SYILYNIGLIHTSNGEHMKALEYYFRALERNPFL, and GEQAIQQGDSEIAGAWFDQAAEYWKQALALTPGN.

The protein belongs to the Ycf3 family.

It is found in the plastid membrane. Its function is as follows. Essential for the assembly of the photosystem I (PSI) complex. May act as a chaperone-like factor to guide the assembly of the PSI subunits. In Cuscuta reflexa (Southern Asian dodder), this protein is Photosystem I assembly protein Ycf3.